The following is a 141-amino-acid chain: Large ribosomal subunit protein uL16 (141 aa).

The segment at 1-23 is disordered; the sequence is MLMPKRTKYRKQMKGRNRGKAHR.

Belongs to the universal ribosomal protein uL16 family. Part of the 50S ribosomal subunit.

Functionally, binds 23S rRNA and is also seen to make contacts with the A and possibly P site tRNAs. This chain is Large ribosomal subunit protein uL16, found in Helicobacter acinonychis (strain Sheeba).